A 453-amino-acid chain; its full sequence is Divalent metal cation transporter MntH (453 aa).

11 helical membrane-spanning segments follow: residues 39 to 59, 66 to 86, 114 to 134, 146 to 166, 175 to 195, 217 to 237, 270 to 290, 310 to 330, 362 to 382, 388 to 408, and 427 to 447; these read LAFL…GNWI, AQYG…AMLL, AIMF…AEVI, IPLI…LFIM, AIVG…VYIS, GILY…NLYL, LSIA…LFFG, PALG…ALLA, LITR…FKGN, QLLV…LIPL, and INII…YLII.

The protein belongs to the NRAMP family.

Its subcellular location is the cell membrane. Functionally, h(+)-stimulated, divalent metal cation uptake system. This chain is Divalent metal cation transporter MntH, found in Staphylococcus epidermidis (strain ATCC 12228 / FDA PCI 1200).